The primary structure comprises 462 residues: Fasciclin-like arabinogalactan protein 18 (462 aa).

An N-terminal signal peptide occupies residues 1 to 25 (MDRCIYGCSVITIFFSFFFLLNASA). N-linked (GlcNAc...) asparagine glycosylation is found at asparagine 32, asparagine 77, and asparagine 293. 2 consecutive FAS1 domains span residues 40–185 (NSNS…ERLL) and 271–414 (VKDF…DGVL).

This sequence belongs to the fasciclin-like AGP family.

Its subcellular location is the secreted. Functionally, may be a cell surface adhesion protein. This is Fasciclin-like arabinogalactan protein 18 (FLA18) from Arabidopsis thaliana (Mouse-ear cress).